The sequence spans 68 residues: Alpha-conotoxin-like Lp1.2 (68 aa).

Positions 1–21 are cleaved as a signal peptide; the sequence is MGMRMMFTVFLLVVLATTVVS. Residues 22–48 constitute a propeptide that is removed on maturation; it reads FTSDRAFDGRNAAASDKASDLISLAVR. 2 disulfide bridges follow: Cys50/Cys56 and Cys51/Cys64. The ser-Xaa-Pro motif, crucial for potent interaction with nAChR stretch occupies residues 52-54; sequence SHP. A Cysteine amide modification is found at Cys64. Positions 65 to 68 are excised as a propeptide; sequence GGKR.

Belongs to the conotoxin A superfamily. As to expression, expressed by the venom duct.

The protein resides in the secreted. Functionally, alpha-conotoxins act on postsynaptic membranes, they bind to the nicotinic acetylcholine receptors (nAChR) and thus inhibit them. In Conus leopardus (Leopard cone), this protein is Alpha-conotoxin-like Lp1.2.